We begin with the raw amino-acid sequence, 243 residues long: Complement C1q tumor necrosis factor-related protein 5 (243 aa).

The signal sequence occupies residues 1–15 (MRPLLVLLLLGLAAG). Positions 15–125 (GSPPLDDNKI…PPPSDAPLPF (111 aa)) are disordered. In terms of domain architecture, Collagen-like spans 30 to 95 (GHPGLPGTPG…AGPAGPTGPA (66 aa)). Low complexity predominate over residues 83–96 (RGEAGPAGPTGPAG). The C1q domain occupies 99 to 238 (SVPPRSAFSA…GFLVYSDWHS (140 aa)).

In terms of assembly, may interact with ERFE. Homotrimer (via collagen-like domain). May form higher order oligomers by supercoiling of the trimers.

The protein localises to the secreted. This Homo sapiens (Human) protein is Complement C1q tumor necrosis factor-related protein 5 (C1QTNF5).